Reading from the N-terminus, the 900-residue chain is Bifunctional uridylyltransferase/uridylyl-removing enzyme (900 aa).

A uridylyltransferase region spans residues 1–342 (MPQVDPELFD…PCEQPVQIQP (342 aa)). The interval 343-705 (LNSRFQLRDG…TTQREFESGS (363 aa)) is uridylyl-removing. The region spanning 461-583 (VDAHTLNLIK…VGDQTHLDYL (123 aa)) is the HD domain. ACT domains follow at residues 706 to 789 (QIFI…IIQR) and 816 to 891 (VLEV…DNGR).

The protein belongs to the GlnD family. The cofactor is Mg(2+).

It catalyses the reaction [protein-PII]-L-tyrosine + UTP = [protein-PII]-uridylyl-L-tyrosine + diphosphate. The catalysed reaction is [protein-PII]-uridylyl-L-tyrosine + H2O = [protein-PII]-L-tyrosine + UMP + H(+). Uridylyltransferase (UTase) activity is inhibited by glutamine, while glutamine activates uridylyl-removing (UR) activity. Modifies, by uridylylation and deuridylylation, the PII regulatory proteins (GlnB and homologs), in response to the nitrogen status of the cell that GlnD senses through the glutamine level. Under low glutamine levels, catalyzes the conversion of the PII proteins and UTP to PII-UMP and PPi, while under higher glutamine levels, GlnD hydrolyzes PII-UMP to PII and UMP (deuridylylation). Thus, controls uridylylation state and activity of the PII proteins, and plays an important role in the regulation of nitrogen assimilation and metabolism. The protein is Bifunctional uridylyltransferase/uridylyl-removing enzyme of Pseudomonas aeruginosa (strain ATCC 15692 / DSM 22644 / CIP 104116 / JCM 14847 / LMG 12228 / 1C / PRS 101 / PAO1).